The following is a 276-amino-acid chain: Elongation factor Ts (276 aa).

Residues 81–84 form an involved in Mg(2+) ion dislocation from EF-Tu region; that stretch reads TDFV.

The protein belongs to the EF-Ts family.

The protein resides in the cytoplasm. Associates with the EF-Tu.GDP complex and induces the exchange of GDP to GTP. It remains bound to the aminoacyl-tRNA.EF-Tu.GTP complex up to the GTP hydrolysis stage on the ribosome. The sequence is that of Elongation factor Ts from Leifsonia xyli subsp. xyli (strain CTCB07).